The primary structure comprises 388 residues: Succinate--CoA ligase [ADP-forming] subunit beta (388 aa).

The 236-residue stretch at lysine 9 to histidine 244 folds into the ATP-grasp domain. Residues lysine 46, glycine 53–glycine 55, glutamate 99, threonine 102, and glutamate 107 each bind ATP. Mg(2+) is bound by residues asparagine 199 and aspartate 213. Residues asparagine 264 and glycine 321–valine 323 each bind substrate.

It belongs to the succinate/malate CoA ligase beta subunit family. In terms of assembly, heterotetramer of two alpha and two beta subunits. Requires Mg(2+) as cofactor.

It catalyses the reaction succinate + ATP + CoA = succinyl-CoA + ADP + phosphate. The enzyme catalyses GTP + succinate + CoA = succinyl-CoA + GDP + phosphate. It functions in the pathway carbohydrate metabolism; tricarboxylic acid cycle; succinate from succinyl-CoA (ligase route): step 1/1. Its function is as follows. Succinyl-CoA synthetase functions in the citric acid cycle (TCA), coupling the hydrolysis of succinyl-CoA to the synthesis of either ATP or GTP and thus represents the only step of substrate-level phosphorylation in the TCA. The beta subunit provides nucleotide specificity of the enzyme and binds the substrate succinate, while the binding sites for coenzyme A and phosphate are found in the alpha subunit. This is Succinate--CoA ligase [ADP-forming] subunit beta from Pectobacterium atrosepticum (strain SCRI 1043 / ATCC BAA-672) (Erwinia carotovora subsp. atroseptica).